Here is a 215-residue protein sequence, read N- to C-terminus: MANVYDWFEERLEIQAIAEDVTSKYVPPHVNIFYCLGGITLTCFLIQFATGFAMTFYYKPTVAEAFSSVEYIMNEVNFGWLIRSIHRWSASMMVLMMILHVFRVYLTGGFKKPRELTWVSGVILAVITVSFGVTGYSLPWDQVGYWAVKIVSGVPEAIPVVGVLISDLLRGGSSVGQATLTRYYSAHTFVLPWLIAVFMLFHFLMIRKQGISGPL.

A helical transmembrane segment spans residues 32-52; the sequence is IFYCLGGITLTCFLIQFATGF. Cysteine 35 serves as a coordination point for heme c. The heme b site is built by histidine 86 and histidine 100. 3 consecutive transmembrane segments (helical) span residues 90–110, 116–136, and 186–206; these read ASMMVLMMILHVFRVYLTGGF, LTWVSGVILAVITVSFGVTGY, and AHTFVLPWLIAVFMLFHFLMI. 2 residues coordinate heme b: histidine 187 and histidine 202.

Belongs to the cytochrome b family. PetB subfamily. In terms of assembly, the 4 large subunits of the cytochrome b6-f complex are cytochrome b6, subunit IV (17 kDa polypeptide, PetD), cytochrome f and the Rieske protein, while the 4 small subunits are PetG, PetL, PetM and PetN. The complex functions as a dimer. Heme b is required as a cofactor. Requires heme c as cofactor.

The protein localises to the cellular thylakoid membrane. Component of the cytochrome b6-f complex, which mediates electron transfer between photosystem II (PSII) and photosystem I (PSI), cyclic electron flow around PSI, and state transitions. This chain is Cytochrome b6, found in Desmonostoc sp. (strain PCC 7906) (Nostoc sp. (strain PCC 7906)).